The following is a 151-amino-acid chain: MSTPDNRSVNFFSLFCRGQHYSKTWPLEKRLAPVFVENRVIKMTRYAIRFMPPIAVFTLCWQIALGGQLGPAVATALFALSLPMQGLWWLGKRSVTPLPPAILNWFYEVRGKLQESGQVLAPVEGKPDYQALADTLKRAFKQLDKTFLDDL.

The Cytoplasmic segment spans residues methionine 1–arginine 45. A helical transmembrane segment spans residues tyrosine 46–leucine 65. Topologically, residues glycine 66–glutamine 68 are periplasmic. A helical transmembrane segment spans residues leucine 69–glycine 91. Topologically, residues lysine 92–leucine 151 are cytoplasmic.

It belongs to the UPF0208 family.

It localises to the cell inner membrane. The polypeptide is UPF0208 membrane protein YfbV (yfbV) (Escherichia coli O6:H1 (strain CFT073 / ATCC 700928 / UPEC)).